The following is a 158-amino-acid chain: Transcriptional repressor NrdR (158 aa).

The segment at 3–34 (CPYCQSEDTQVKDSRPAEDGAVIRRRRVCSVC) is a zinc-finger region. The 91-residue stretch at 49 to 139 (LMVVKKSGRR…VYRNFSKAVD (91 aa)) folds into the ATP-cone domain.

This sequence belongs to the NrdR family. Requires Zn(2+) as cofactor.

Functionally, negatively regulates transcription of bacterial ribonucleotide reductase nrd genes and operons by binding to NrdR-boxes. This Brucella abortus (strain S19) protein is Transcriptional repressor NrdR.